Consider the following 917-residue polypeptide: Auxin response factor 17 (917 aa).

Positions 134 to 236 (FCKTLTASDT…QLLLGIRRAN (103 aa)) form a DNA-binding region, TF-B3. The interval 571–649 (SVPNALSPFS…RPTAVPVPDP (79 aa)) is disordered. 2 stretches are compositionally biased toward low complexity: residues 576 to 594 (LSPF…MTLQ) and 604 to 620 (SYPD…NTST). Residues 786–870 (ATFVKVYKSG…SCIKILSPQE (85 aa)) enclose the PB1 domain.

This sequence belongs to the ARF family. In terms of assembly, homodimers and heterodimers. As to expression, expressed in roots, culms, leaves and young panicles.

The protein localises to the nucleus. Functionally, auxin response factors (ARFs) are transcriptional factors that bind specifically to the DNA sequence 5'-TGTCTC-3' found in the auxin-responsive promoter elements (AuxREs). This is Auxin response factor 17 (ARF17) from Oryza sativa subsp. japonica (Rice).